The primary structure comprises 123 residues: MPTISQLIRKPRQEKTYREKARHLGASPQKRGVCTRVYTTTPKKPNSALRKVAKVRLTNGFEVIGYIPGEGHNLQEHSVVMIRGGRVKDLPGVRYHILRGVLDTQGVKNRKQRRSKYGAKRPK.

The interval 11 to 32 (PRQEKTYREKARHLGASPQKRG) is disordered. 3-methylthioaspartic acid is present on D89.

The protein belongs to the universal ribosomal protein uS12 family. As to quaternary structure, part of the 30S ribosomal subunit. Contacts proteins S8 and S17. May interact with IF1 in the 30S initiation complex.

In terms of biological role, with S4 and S5 plays an important role in translational accuracy. Functionally, interacts with and stabilizes bases of the 16S rRNA that are involved in tRNA selection in the A site and with the mRNA backbone. Located at the interface of the 30S and 50S subunits, it traverses the body of the 30S subunit contacting proteins on the other side and probably holding the rRNA structure together. The combined cluster of proteins S8, S12 and S17 appears to hold together the shoulder and platform of the 30S subunit. In Methylocella silvestris (strain DSM 15510 / CIP 108128 / LMG 27833 / NCIMB 13906 / BL2), this protein is Small ribosomal subunit protein uS12.